We begin with the raw amino-acid sequence, 130 residues long: Flagellar assembly factor FliW (130 aa).

It belongs to the FliW family. Interacts with translational regulator CsrA and flagellin(s).

Its subcellular location is the cytoplasm. In terms of biological role, acts as an anti-CsrA protein, binds CsrA and prevents it from repressing translation of its target genes, one of which is flagellin. Binds to flagellin and participates in the assembly of the flagellum. The chain is Flagellar assembly factor FliW from Borreliella burgdorferi (strain ATCC 35210 / DSM 4680 / CIP 102532 / B31) (Borrelia burgdorferi).